A 254-amino-acid chain; its full sequence is 3-deoxy-manno-octulosonate cytidylyltransferase (254 aa).

The protein belongs to the KdsB family.

The protein localises to the cytoplasm. It catalyses the reaction 3-deoxy-alpha-D-manno-oct-2-ulosonate + CTP = CMP-3-deoxy-beta-D-manno-octulosonate + diphosphate. The protein operates within nucleotide-sugar biosynthesis; CMP-3-deoxy-D-manno-octulosonate biosynthesis; CMP-3-deoxy-D-manno-octulosonate from 3-deoxy-D-manno-octulosonate and CTP: step 1/1. Its pathway is bacterial outer membrane biogenesis; lipopolysaccharide biosynthesis. Functionally, activates KDO (a required 8-carbon sugar) for incorporation into bacterial lipopolysaccharide in Gram-negative bacteria. This chain is 3-deoxy-manno-octulosonate cytidylyltransferase, found in Pseudomonas fluorescens (strain ATCC BAA-477 / NRRL B-23932 / Pf-5).